The sequence spans 62 residues: Photosystem II reaction center protein Z (62 aa).

The next 2 helical transmembrane spans lie at Ala-8–Ala-28 and Phe-41–Ile-61.

The protein belongs to the PsbZ family. As to quaternary structure, PSII is composed of 1 copy each of membrane proteins PsbA, PsbB, PsbC, PsbD, PsbE, PsbF, PsbH, PsbI, PsbJ, PsbK, PsbL, PsbM, PsbT, PsbY, PsbZ, Psb30/Ycf12, at least 3 peripheral proteins of the oxygen-evolving complex and a large number of cofactors. It forms dimeric complexes.

It is found in the plastid. The protein resides in the chloroplast thylakoid membrane. May control the interaction of photosystem II (PSII) cores with the light-harvesting antenna, regulates electron flow through the 2 photosystem reaction centers. PSII is a light-driven water plastoquinone oxidoreductase, using light energy to abstract electrons from H(2)O, generating a proton gradient subsequently used for ATP formation. This is Photosystem II reaction center protein Z from Citrus sinensis (Sweet orange).